Reading from the N-terminus, the 295-residue chain is 4-diphosphocytidyl-2-C-methyl-D-erythritol kinase (295 aa).

Residue K22 is part of the active site. 106 to 116 lines the ATP pocket; the sequence is PAGGGFGGGSS. D148 is a catalytic residue.

This sequence belongs to the GHMP kinase family. IspE subfamily.

It carries out the reaction 4-CDP-2-C-methyl-D-erythritol + ATP = 4-CDP-2-C-methyl-D-erythritol 2-phosphate + ADP + H(+). The protein operates within isoprenoid biosynthesis; isopentenyl diphosphate biosynthesis via DXP pathway; isopentenyl diphosphate from 1-deoxy-D-xylulose 5-phosphate: step 3/6. In terms of biological role, catalyzes the phosphorylation of the position 2 hydroxy group of 4-diphosphocytidyl-2C-methyl-D-erythritol. The chain is 4-diphosphocytidyl-2-C-methyl-D-erythritol kinase from Xanthomonas campestris pv. campestris (strain 8004).